The primary structure comprises 231 residues: Casparian strip membrane protein 1 (231 aa).

Topologically, residues 1–69 (MSTSETATVI…FRQSDRGSRC (69 aa)) are cytoplasmic. The helical transmembrane segment at 70–90 (LAFLDFLLRIAAFGPALAAAI) threads the bilayer. Residues 91–117 (ATGTSDETLSVFTEFFQFRARFDDFPA) lie on the Extracellular side of the membrane. The chain crosses the membrane as a helical span at residues 118-138 (FLFLMVANAIAAGYLVLSLPF). Residues 139 to 152 (SAVVVLRPQATGLR) lie on the Cytoplasmic side of the membrane. The helical transmembrane segment at 153–173 (LLLLVCDTIMIGLLTAAAAAA) threads the bilayer. Topologically, residues 174–207 (AAIVELAHNGNERANWVAICMQFHGFCQRTSGAV) are extracellular. Residues 208 to 228 (VASFLSVFLFLLLVVLAAFAI) form a helical membrane-spanning segment. Over 229–231 (RKR) the chain is Cytoplasmic.

This sequence belongs to the Casparian strip membrane proteins (CASP) family. Homodimer and heterodimers.

The protein resides in the cell membrane. In terms of biological role, regulates membrane-cell wall junctions and localized cell wall deposition. Required for establishment of the Casparian strip membrane domain (CSD) and the subsequent formation of Casparian strips, a cell wall modification of the root endodermis that determines an apoplastic barrier between the intraorganismal apoplasm and the extraorganismal apoplasm and prevents lateral diffusion. The polypeptide is Casparian strip membrane protein 1 (Brachypodium distachyon (Purple false brome)).